The following is a 147-amino-acid chain: Hemoglobin subunit beta (147 aa).

The 146-residue stretch at 2 to 147 folds into the Globin domain; it reads EWTDAERSAI…VVSALCRQYH (146 aa). The heme b site is built by histidine 63 and histidine 92.

Belongs to the globin family. Heterotetramer of two alpha chains and two beta chains. As to expression, red blood cells.

Its function is as follows. Involved in oxygen transport from gills to the various peripheral tissues. The sequence is that of Hemoglobin subunit beta (hbb) from Carassius auratus (Goldfish).